The following is a 97-amino-acid chain: Theromacin (97 aa).

The first 22 residues, 1 to 22 (MELKSGLSILLCFGICIAVINA), serve as a signal peptide directing secretion. 5 disulfides stabilise this stretch: cysteine 24–cysteine 31, cysteine 46–cysteine 50, cysteine 53–cysteine 95, cysteine 61–cysteine 69, and cysteine 79–cysteine 81.

As to expression, coelomic liquid (at protein level). Expressed in large fat cells in contact with coelomic cavities, in intestinal epithelia and at the epidermis level.

Its subcellular location is the secreted. Functionally, has a bactericidal activity. Active against M.luteus. No activity toward E.coli and F.oxysporum. The protein is Theromacin of Theromyzon tessulatum (Duck leech).